The chain runs to 307 residues: Protein FAM76A (307 aa).

2 disordered regions span residues Ser-161–Gln-181 and Lys-287–Pro-307. Positions Ile-217 to Lys-297 form a coiled coil.

Belongs to the FAM76 family.

The chain is Protein FAM76A (FAM76A) from Gallus gallus (Chicken).